Reading from the N-terminus, the 126-residue chain is uncharacterized protein (126 aa).

Residues 1–28 (MAGEAVSEHTPDSQEVTVTSVVCCLDSV) are Cytoplasmic-facing. A helical membrane pass occupies residues 29 to 49 (VEIGHHVVYSVVTPLIVAVLI). The Extracellular portion of the chain corresponds to 50 to 75 (DTMAGEAVLEHTSDSQEEIVTTVVCS). Residues 76–96 (VVPLVCFVVSVVCFVISVVEI) traverse the membrane as a helical segment. Residue Gly-97 is a topological domain, cytoplasmic. A helical transmembrane segment spans residues 98–118 (HHVVYSVVAPLTVTVAVETIA). Residues 119 to 126 (EEMDSVHT) lie on the Extracellular side of the membrane.

It localises to the membrane. This is an uncharacterized protein from Saccharomyces cerevisiae (strain ATCC 204508 / S288c) (Baker's yeast).